The following is a 145-amino-acid chain: Large ribosomal subunit protein uL16 (145 aa).

Belongs to the universal ribosomal protein uL16 family. In terms of assembly, part of the 50S ribosomal subunit.

Binds 23S rRNA and is also seen to make contacts with the A and possibly P site tRNAs. This Herpetosiphon aurantiacus (strain ATCC 23779 / DSM 785 / 114-95) protein is Large ribosomal subunit protein uL16.